The primary structure comprises 262 residues: Adenosylcobinamide-GDP ribazoletransferase (262 aa).

The next 7 membrane-spanning stretches (helical) occupy residues 37–57, 58–78, 112–132, 139–159, 183–203, 205–225, and 237–257; these read SMPL…ALCS, MFSF…GIWL, VGAF…LFLY, IPPA…AWLL, AVWA…FGGV, VWTS…AKPW, and VLGA…WLLH.

The protein belongs to the CobS family. Mg(2+) is required as a cofactor.

The protein resides in the cell membrane. It catalyses the reaction alpha-ribazole + adenosylcob(III)inamide-GDP = adenosylcob(III)alamin + GMP + H(+). The catalysed reaction is alpha-ribazole 5'-phosphate + adenosylcob(III)inamide-GDP = adenosylcob(III)alamin 5'-phosphate + GMP + H(+). It participates in cofactor biosynthesis; adenosylcobalamin biosynthesis; adenosylcobalamin from cob(II)yrinate a,c-diamide: step 7/7. Functionally, joins adenosylcobinamide-GDP and alpha-ribazole to generate adenosylcobalamin (Ado-cobalamin). Also synthesizes adenosylcobalamin 5'-phosphate from adenosylcobinamide-GDP and alpha-ribazole 5'-phosphate. The sequence is that of Adenosylcobinamide-GDP ribazoletransferase from Geobacillus thermodenitrificans (strain NG80-2).